A 205-amino-acid chain; its full sequence is Probable GTP-binding protein EngB (205 aa).

The EngB-type G domain occupies 29-203; the sequence is QGAEIAFIGR…KAVLSQWFRS (175 aa). GTP contacts are provided by residues 37–44, 64–68, 82–85, 149–152, and 182–184; these read GRSNAGKS, GRTQM, DLPG, TKSD, and FSS. Residues serine 44 and threonine 66 each coordinate Mg(2+).

It belongs to the TRAFAC class TrmE-Era-EngA-EngB-Septin-like GTPase superfamily. EngB GTPase family. It depends on Mg(2+) as a cofactor.

In terms of biological role, necessary for normal cell division and for the maintenance of normal septation. This is Probable GTP-binding protein EngB from Coxiella burnetii (strain RSA 493 / Nine Mile phase I).